A 375-amino-acid chain; its full sequence is Aminomethyltransferase (375 aa).

This sequence belongs to the GcvT family. The glycine cleavage system is composed of four proteins: P, T, L and H.

It catalyses the reaction N(6)-[(R)-S(8)-aminomethyldihydrolipoyl]-L-lysyl-[protein] + (6S)-5,6,7,8-tetrahydrofolate = N(6)-[(R)-dihydrolipoyl]-L-lysyl-[protein] + (6R)-5,10-methylene-5,6,7,8-tetrahydrofolate + NH4(+). Functionally, the glycine cleavage system catalyzes the degradation of glycine. The chain is Aminomethyltransferase from Cupriavidus necator (strain ATCC 17699 / DSM 428 / KCTC 22496 / NCIMB 10442 / H16 / Stanier 337) (Ralstonia eutropha).